The following is a 276-amino-acid chain: Cytoskeleton protein RodZ (276 aa).

Residues 1-110 (MTSMRKKTIG…SSKKKKKKTS (110 aa)) are Cytoplasmic-facing. A helical; Signal-anchor for type II membrane protein transmembrane segment spans residues 111 to 131 (FLPLFYFILFALSILIFVTYY). Residues 132-276 (VWNYIQTQPE…GQITVTFTKN (145 aa)) lie on the Extracellular side of the membrane.

This sequence belongs to the RodZ family. In terms of assembly, interacts with MltG and MreC in the elongasome. Interacts with KhpB (also called EloR/Jag).

It localises to the cell membrane. Its function is as follows. Cytoskeletal protein that is involved in cell-shape control through regulation of the length of the long axis. Probably part of the elongasome which synthesizes peripheral peptidoglycan. This is Cytoskeleton protein RodZ from Streptococcus pneumoniae (strain ATCC BAA-255 / R6).